We begin with the raw amino-acid sequence, 829 residues long: Probable beta-glucosidase H (829 aa).

N-linked (GlcNAc...) asparagine glycosylation occurs at Asn-13. The active site involves Asp-225. N-linked (GlcNAc...) asparagine glycans are attached at residues Asn-304, Asn-473, Asn-602, Asn-627, and Asn-664. In terms of domain architecture, PA14 spans 389–548; that stretch reads RMLSNAVIHF…DPEQMVANAV (160 aa).

This sequence belongs to the glycosyl hydrolase 3 family.

It is found in the secreted. The catalysed reaction is Hydrolysis of terminal, non-reducing beta-D-glucosyl residues with release of beta-D-glucose.. The protein operates within glycan metabolism; cellulose degradation. Beta-glucosidases are one of a number of cellulolytic enzymes involved in the degradation of cellulosic biomass. Catalyzes the last step releasing glucose from the inhibitory cellobiose. The protein is Probable beta-glucosidase H (bglH) of Neosartorya fischeri (strain ATCC 1020 / DSM 3700 / CBS 544.65 / FGSC A1164 / JCM 1740 / NRRL 181 / WB 181) (Aspergillus fischerianus).